Consider the following 330-residue polypeptide: DNA-binding death effector domain-containing protein 2 (330 aa).

The region spanning 25 to 104 is the DED domain; it reads SLHRMFEVVG…RHDLLPHLAR (80 aa). The Nuclear localization signal motif lies at 104–109; sequence RKRRRP. The segment at 104-195 is disordered; it reads RKRRRPVSPE…HQELGRPSSE (92 aa). Low complexity predominate over residues 137 to 147; it reads ASSSSDSPQSQ. A Bipartite nuclear localization signal motif is present at residues 156-174; that stretch reads KRQRRSRGRPSSGARQRRR.

In terms of assembly, interacts with CASP8, CASP10 and GTF3C3. Homodimerizes and heterodimerizes with DEDD. In terms of tissue distribution, expression is high in liver, heart, kidney, and testis but low in brain, spleen, lung, and skeleton muscle.

The protein resides in the nucleus. It localises to the nucleolus. In terms of biological role, may play a critical role in death receptor-induced apoptosis and may target CASP8 and CASP10 to the nucleus. May regulate degradation of intermediate filaments during apoptosis. May play a role in the general transcription machinery in the nucleus and might be an important regulator of the activity of GTF3C3. In Mus musculus (Mouse), this protein is DNA-binding death effector domain-containing protein 2 (Dedd2).